We begin with the raw amino-acid sequence, 179 residues long: Transcription factor 21 (179 aa).

Positions 19 to 88 (DCDSLKVDSN…VQRNAANARE (70 aa)) are disordered. 2 stretches are compositionally biased toward polar residues: residues 30-49 (EFGT…NGSP) and 70-80 (SGVSQEGKQVQ). Residues 79–131 (VQRNAANARERARMRVLSKAFSRLKTTLPWVPPDTKLSKLDTLRLASSYIAHL) form the bHLH domain.

In terms of assembly, efficient DNA binding requires dimerization with another bHLH protein. Forms a heterodimer with TCF3 and binds the E box (5'-CANNTG-3'). In terms of tissue distribution, expressed at high levels in lung, kidney, gut, heart, ovary and podocytes (visceral glomerular epithelial cells). Also found in spleen, large intestine, uterus, bladder and testis.

It localises to the nucleus. In terms of biological role, involved in epithelial-mesenchymal interactions in kidney and lung morphogenesis that include epithelial differentiation and branching morphogenesis. May be involved in the organogenesis of the spleen and heart and in cardiac and coronary artery development. May function in the development and sex differentiation of gonad via transcriptional regulation of AD4BP/SF-1. The polypeptide is Transcription factor 21 (Tcf21) (Mus musculus (Mouse)).